We begin with the raw amino-acid sequence, 407 residues long: Peptidase T (407 aa).

Residue His81 participates in Zn(2+) binding. Residue Asp83 is part of the active site. Asp142 is a binding site for Zn(2+). Glu176 functions as the Proton acceptor in the catalytic mechanism. Zn(2+) is bound by residues Glu177, Asp199, and His381.

This sequence belongs to the peptidase M20B family. Zn(2+) serves as cofactor.

Its subcellular location is the cytoplasm. It carries out the reaction Release of the N-terminal residue from a tripeptide.. Its function is as follows. Cleaves the N-terminal amino acid of tripeptides. The sequence is that of Peptidase T from Streptococcus sanguinis (strain SK36).